The sequence spans 115 residues: Peptidyl-tRNA hydrolase (115 aa).

Belongs to the PTH2 family.

It localises to the cytoplasm. It catalyses the reaction an N-acyl-L-alpha-aminoacyl-tRNA + H2O = an N-acyl-L-amino acid + a tRNA + H(+). Functionally, the natural substrate for this enzyme may be peptidyl-tRNAs which drop off the ribosome during protein synthesis. In Methanocaldococcus jannaschii (strain ATCC 43067 / DSM 2661 / JAL-1 / JCM 10045 / NBRC 100440) (Methanococcus jannaschii), this protein is Peptidyl-tRNA hydrolase.